Consider the following 228-residue polypeptide: uncharacterized protein (228 aa).

The interval 1–34 (MPRDTKPYSRPANAPRPGVKTERSNQFKAASTKY) is disordered.

This is an uncharacterized protein from Orgyia pseudotsugata (Douglas-fir tussock moth).